The sequence spans 135 residues: Ribosome-binding factor A (135 aa).

Belongs to the RbfA family. As to quaternary structure, monomer. Binds 30S ribosomal subunits, but not 50S ribosomal subunits or 70S ribosomes.

The protein localises to the cytoplasm. In terms of biological role, one of several proteins that assist in the late maturation steps of the functional core of the 30S ribosomal subunit. Associates with free 30S ribosomal subunits (but not with 30S subunits that are part of 70S ribosomes or polysomes). Required for efficient processing of 16S rRNA. May interact with the 5'-terminal helix region of 16S rRNA. This chain is Ribosome-binding factor A, found in Aliivibrio fischeri (strain MJ11) (Vibrio fischeri).